Here is a 202-residue protein sequence, read N- to C-terminus: MIAYVEGRVAEISGNACVVVTEGGVGYEVHLPAHTLSRLPERGGQVAFHVRTEVREDALELFGFSTWDERQTFMVLTTISKVGARTALAILSQFRPDDLRRLVVEDDVLALTRVSGIGKKTAQHIFLELKYKLKVEDLPAGLVLAGGAAPGGVFRDALAGLGNLGYLEDEAAPVLKEVLKAEPDLDVAGALRAALKALARGR.

Positions 1-65 (MIAYVEGRVA…EDALELFGFS (65 aa)) are domain I. The tract at residues 66–144 (TWDERQTFMV…VEDLPAGLVL (79 aa)) is domain II. Residues 145–155 (AGGAAPGGVFR) form a flexible linker region. The segment at 155 to 202 (RDALAGLGNLGYLEDEAAPVLKEVLKAEPDLDVAGALRAALKALARGR) is domain III.

The protein belongs to the RuvA family. Homotetramer. Forms an RuvA(8)-RuvB(12)-Holliday junction (HJ) complex. HJ DNA is sandwiched between 2 RuvA tetramers; dsDNA enters through RuvA and exits via RuvB. An RuvB hexamer assembles on each DNA strand where it exits the tetramer. Each RuvB hexamer is contacted by two RuvA subunits (via domain III) on 2 adjacent RuvB subunits; this complex drives branch migration. In the full resolvosome a probable DNA-RuvA(4)-RuvB(12)-RuvC(2) complex forms which resolves the HJ.

Its subcellular location is the cytoplasm. Its function is as follows. The RuvA-RuvB-RuvC complex processes Holliday junction (HJ) DNA during genetic recombination and DNA repair, while the RuvA-RuvB complex plays an important role in the rescue of blocked DNA replication forks via replication fork reversal (RFR). RuvA specifically binds to HJ cruciform DNA, conferring on it an open structure. The RuvB hexamer acts as an ATP-dependent pump, pulling dsDNA into and through the RuvAB complex. HJ branch migration allows RuvC to scan DNA until it finds its consensus sequence, where it cleaves and resolves the cruciform DNA. The protein is Holliday junction branch migration complex subunit RuvA of Nitratidesulfovibrio vulgaris (strain DSM 19637 / Miyazaki F) (Desulfovibrio vulgaris).